A 306-amino-acid chain; its full sequence is Beta-lactamase 1 (306 aa).

The first 27 residues, 1–27 (MILKNKRMLKIGICVGILGLSITSLEA), serve as a signal peptide directing secretion. Ser-91 (acyl-ester intermediate) is an active-site residue. Residue Glu-187 is the Proton acceptor of the active site. 253–255 (KSG) is a binding site for substrate.

It belongs to the class-A beta-lactamase family.

It carries out the reaction a beta-lactam + H2O = a substituted beta-amino acid. Its function is as follows. This protein is a beta-lactamase with a substrate specificity for penicillins. The protein is Beta-lactamase 1 (blaY) of Bacillus cereus.